A 450-amino-acid polypeptide reads, in one-letter code: uncharacterized protein (450 aa).

12 helical membrane passes run 10-30, 53-73, 95-115, 120-140, 148-168, 199-219, 242-262, 267-287, 302-322, 343-363, 378-398, and 428-448; these read IIVL…LVIA, LGGG…AIAI, TAGN…LFAI, LLPV…SIFN, AVAC…PVGF, LAML…IFIT, IANI…ATFA, TSST…CGIF, LMAM…VINA, IAAL…GSSF, LSFG…AALG, and VVPT…IAAM.

It localises to the cell membrane. This is an uncharacterized protein from Haemophilus influenzae (strain ATCC 51907 / DSM 11121 / KW20 / Rd).